Reading from the N-terminus, the 348-residue chain is Phenylalanine--tRNA ligase alpha subunit (348 aa).

Glu262 contacts Mg(2+).

It belongs to the class-II aminoacyl-tRNA synthetase family. Phe-tRNA synthetase alpha subunit type 1 subfamily. As to quaternary structure, tetramer of two alpha and two beta subunits. The cofactor is Mg(2+).

The protein resides in the cytoplasm. The catalysed reaction is tRNA(Phe) + L-phenylalanine + ATP = L-phenylalanyl-tRNA(Phe) + AMP + diphosphate + H(+). The chain is Phenylalanine--tRNA ligase alpha subunit from Streptococcus pneumoniae serotype 2 (strain D39 / NCTC 7466).